A 380-amino-acid polypeptide reads, in one-letter code: Cobalt-precorrin-5B C(1)-methyltransferase (380 aa).

This sequence belongs to the CbiD family.

It catalyses the reaction Co-precorrin-5B + S-adenosyl-L-methionine = Co-precorrin-6A + S-adenosyl-L-homocysteine. The protein operates within cofactor biosynthesis; adenosylcobalamin biosynthesis; cob(II)yrinate a,c-diamide from sirohydrochlorin (anaerobic route): step 6/10. Its function is as follows. Catalyzes the methylation of C-1 in cobalt-precorrin-5B to form cobalt-precorrin-6A. The chain is Cobalt-precorrin-5B C(1)-methyltransferase from Salinispora arenicola (strain CNS-205).